We begin with the raw amino-acid sequence, 207 residues long: LexA repressor (207 aa).

Residues 28–48 (RAEIARHLGFKSANAAEEHLK) constitute a DNA-binding region (H-T-H motif). Active-site for autocatalytic cleavage activity residues include Ser-124 and Lys-161.

The protein belongs to the peptidase S24 family. In terms of assembly, homodimer.

It catalyses the reaction Hydrolysis of Ala-|-Gly bond in repressor LexA.. Its function is as follows. Represses a number of genes involved in the response to DNA damage (SOS response), including recA and lexA. In the presence of single-stranded DNA, RecA interacts with LexA causing an autocatalytic cleavage which disrupts the DNA-binding part of LexA, leading to derepression of the SOS regulon and eventually DNA repair. The sequence is that of LexA repressor from Pseudoalteromonas atlantica (strain T6c / ATCC BAA-1087).